The chain runs to 78 residues: Large ribosomal subunit protein bL28 (78 aa).

A disordered region spans residues 1-23 (MSRVCQVTGKRPMVGNNRSHAKN).

This sequence belongs to the bacterial ribosomal protein bL28 family.

The chain is Large ribosomal subunit protein bL28 from Shewanella pealeana (strain ATCC 700345 / ANG-SQ1).